Reading from the N-terminus, the 283-residue chain is CDP-abequose synthase (283 aa).

Residues 7-13, 48-49, tyrosine 129, and lysine 133 contribute to the NAD(+) site; these read GGSGYIG and EF. Tyrosine 129 functions as the Proton acceptor in the catalytic mechanism.

The protein belongs to the NAD(P)-dependent epimerase/dehydratase family.

The catalysed reaction is CDP-alpha-D-abequose + NADP(+) = CDP-4-dehydro-3,6-dideoxy-alpha-D-glucose + NADPH + H(+). It functions in the pathway bacterial outer membrane biogenesis; LPS O-antigen biosynthesis. The CDP-abequose synthase is involved in lipopolysaccharides (LPS) synthesis containing abequose which are important antigens of the cell surface responsible for the serological O specificity. Derivatives of the 3,6-dideoxyhexose group have a particular highly immunogenic character. The protein is CDP-abequose synthase (rfbJ) of Yersinia pseudotuberculosis.